The chain runs to 527 residues: Heat shock factor protein HSF8 (527 aa).

The span at 1-13 (MEPNSSGSGKAAV) shows a compositional bias: low complexity. 5 disordered regions span residues 1–37 (MEPN…PSAN), 130–160 (RRKP…HSAS), 243–275 (NESN…ADGQ), 300–343 (SPRL…TSGK), and 476–501 (QSPS…QING). Positions 25 to 37 (QPAPAPAPMPSAN) are enriched in pro residues. A DNA-binding region spans residues 39–133 (PPPFLVKTYD…LLKSISRRKP (95 aa)). The span at 136–157 (GHAQQQQQPHGHAQQQMQPPGH) shows a compositional bias: low complexity. Polar residues-rich tracts occupy residues 319–328 (SPQSNASSGR) and 491–501 (NTSETKPQING).

It belongs to the HSF family. As to quaternary structure, homotrimer. Exhibits temperature-dependent phosphorylation.

The protein localises to the nucleus. Functionally, DNA-binding protein that specifically binds heat shock promoter elements (HSE) and activates transcription. This chain is Heat shock factor protein HSF8 (HSF8), found in Solanum peruvianum (Peruvian tomato).